A 240-amino-acid chain; its full sequence is Protein unc-119 homolog A (240 aa).

Gly residues predominate over residues 1–12 (MKVKKGGGGTGS). The segment at 1–62 (MKVKKGGGGT…PLQGKQPIGP (62 aa)) is disordered. A phosphoserine; by CK2 mark is found at Ser37, Ser39, and Ser41. Tyr131 serves as a coordination point for tetradecanoate.

This sequence belongs to the PDE6D/unc-119 family. As to quaternary structure, may interact with GTP-bound ARL1. Interacts with ARL2 and ARL3 (GTP-bound forms); this promotes the release of myristoylated cargo proteins. Found in a complex with ARL3, RP2 and UNC119; RP2 induces hydrolysis of GTP ARL3 in the complex, leading to the release of UNC119. Interacts with NPHP3 (when myristoylated). Interacts with CYS1 (when myristoylated). Interacts with MACIR; interaction only takes place when UNC119 is not liganded with myristoylated proteins. Interacts with CABP4; in the absence of calcium. Interacts with DNM1; leading to a decrease of DNM1 GTPase activity. Interacts with LCK; this interaction plays a crucial role in activation of LCK. Interacts with FYN. Interacts with RAB11A; in a cell cycle-dependent manner. Interacts with LYN (via SH2 and SH3 domains); leading to LYN activation. Found in a complex with ABL1, ABL2, CRK and UNC119; leading to the inhibition of CRK phosphorylation by ABL kinases. Interacts with CD44. Interacts with KLHL18 (via kelch repeats). Interacts with PPP3CA, PPP3CB and PPP3CC. Interacts with USP48; this interaction promotes UNC119 stability. Phosphorylation suppresses its interaction with KLHL18 and down-regulates its KLHL18-mediated degradation. Phosphorylated more under light conditions than dark conditions. Dephosphorylated by calcineurin. As to expression, localized in photoreceptor synapses in the outer plexiform layer of the retina.

The protein localises to the cytoplasm. It localises to the cytoskeleton. The protein resides in the microtubule organizing center. It is found in the centrosome. Its subcellular location is the spindle. The protein localises to the spindle pole. Functionally, involved in synaptic functions in photoreceptor cells, the signal transduction in immune cells as a Src family kinase activator, endosome recycling, the uptake of bacteria and endocytosis, protein trafficking in sensory neurons and as lipid-binding chaperone with specificity for a diverse subset of myristoylated proteins. Specifically binds the myristoyl moiety of a subset of N-terminally myristoylated proteins and is required for their localization. Binds myristoylated GNAT1 and is required for G-protein localization and trafficking in sensory neurons. Probably plays a role in trafficking proteins in photoreceptor cells. Plays important roles in mediating Src family kinase signals for the completion of cytokinesis via RAB11A. The chain is Protein unc-119 homolog A (Unc119) from Mus musculus (Mouse).